The following is a 334-amino-acid chain: MAAGLPETEIDVRALGKVAVLMGGDSAEREVSLMSGGGVLQALRARGVDAHAFDPSQSDLSELKSHGYARCFIALHGRHGEDGTVQGALELLGIPYTGPGVMASAIAMDKIMTKRIWRFEGLPTPDWRLVSSAAETAQALEDLGSPMIVKPSREGSTIGLTKVTSPGQCEQAYRLASRYDPEVLCEQFIEGEETTCPVLGQGAGAHALPVIRIVAPEGNYDYQNKYFTDVTQYHCPCGLPEQEEREIQRLVVEAFRTLQCRGWARADIMIRASDRKPFLLEINTSPGMTGHSLVPMSARAMGVSYEELCLRILAGASLDARQGQVDAAGHPGAA.

The ATP-grasp domain maps to 114-314 (KRIWRFEGLP…YEELCLRILA (201 aa)). 140–195 (LEDLGSPMIVKPSREGSTIGLTKVTSPGQCEQAYRLASRYDPEVLCEQFIEGEETT) is an ATP binding site. Positions 267, 281, and 283 each coordinate Mg(2+).

The protein belongs to the D-alanine--D-alanine ligase family. It depends on Mg(2+) as a cofactor. Mn(2+) serves as cofactor.

The protein localises to the cytoplasm. It catalyses the reaction 2 D-alanine + ATP = D-alanyl-D-alanine + ADP + phosphate + H(+). It functions in the pathway cell wall biogenesis; peptidoglycan biosynthesis. Cell wall formation. This Paracidovorax citrulli (strain AAC00-1) (Acidovorax citrulli) protein is D-alanine--D-alanine ligase.